A 262-amino-acid polypeptide reads, in one-letter code: 14-3-3-like protein B (262 aa).

Belongs to the 14-3-3 family.

The polypeptide is 14-3-3-like protein B (Hordeum vulgare (Barley)).